We begin with the raw amino-acid sequence, 873 residues long: MDARYNPPAIESKWQAHWRELGLDRTPELTAESRKFYALSMFPYPSGSLHMGHVRNYTITDVIARHKRMQGYAVLHPMGWDAFGLPAENAAIDRGIPPAKWTYQNIAQMRDQLQRLGLSYDWEREITTCAPDYYKWTQWLFLQFFKAGLAYQKEAPVNWDPVDQTVLANEQVDAEGRSWRSGALVEKRLLKQWFLKITAYADQLLADLEKLSGWPERVLTMQENWIGQSVGARVVFKTETGEELPVFTTRPDTLWGATFMVLAPEHPLVEKLTTPEQEVAVKAYRAEAAARSEIERSAEDREKTGVWTGSYAINPVNQERIPIWIADYVLMGYGTGAIMAVPAHDQRDFEFARQFGLPIKLVVQPPQGGVTSAEDLQAAWTGEGVLINSGPLNGIPVGKGPGQSVERAIAWLEEQGLGERQVNYRLRDWLISRQRYWGCPIPIIHCPHCGIVPVPEEDLPVLLPEDVELTGRGGSPLAQLEDWVKVKCPACGADARRETDTMDTFICSSWYFLRFSDPRNDREIFRKDLVNAWLPVDQYVGGIEHAILHLLYSRFFTKVLRDLGLLNFDEPFSRLLTQGMVQARTYYNPNKSGKDRWIPTALVKDPNDPRDPETGEPLQVIYATMSKSKGNGVDPEEVLANYGADTARMFILFKAPPEKDLEWDDADVEGQFRFLNRVWRQVYEFVVRGSGTESLQGKAAELLQAKVEAGSLTKAERDLRRAVHTAIKEVSEDLEEYQFNTAIAGLMKLSNALAEAEIPDSPVYAEGIRTLVLLLAPFAPHMAEELWQALGGTDSVHRQAWPTYDPAALVADTVTIVVQVNGKLRGSFEAPADVTPQEQERLALQSEAAQRYLQGMTPKRVIVVPKKLVNLVV.

The 'HIGH' region motif lies at proline 43–histidine 53. A 'KMSKS' region motif is present at residues threonine 624–serine 628. Lysine 627 serves as a coordination point for ATP.

It belongs to the class-I aminoacyl-tRNA synthetase family.

It is found in the cytoplasm. It catalyses the reaction tRNA(Leu) + L-leucine + ATP = L-leucyl-tRNA(Leu) + AMP + diphosphate. This is Leucine--tRNA ligase from Synechococcus sp. (strain JA-3-3Ab) (Cyanobacteria bacterium Yellowstone A-Prime).